The primary structure comprises 475 residues: UDP-N-acetylmuramate--L-alanine ligase (475 aa).

Glycine 125–threonine 131 is a binding site for ATP.

Belongs to the MurCDEF family.

Its subcellular location is the cytoplasm. The catalysed reaction is UDP-N-acetyl-alpha-D-muramate + L-alanine + ATP = UDP-N-acetyl-alpha-D-muramoyl-L-alanine + ADP + phosphate + H(+). It functions in the pathway cell wall biogenesis; peptidoglycan biosynthesis. Cell wall formation. This is UDP-N-acetylmuramate--L-alanine ligase from Haemophilus influenzae (strain 86-028NP).